Reading from the N-terminus, the 129-residue chain is Small ribosomal subunit protein uS11 (129 aa).

This sequence belongs to the universal ribosomal protein uS11 family. Part of the 30S ribosomal subunit. Interacts with proteins S7 and S18. Binds to IF-3.

Functionally, located on the platform of the 30S subunit, it bridges several disparate RNA helices of the 16S rRNA. Forms part of the Shine-Dalgarno cleft in the 70S ribosome. In Lysinibacillus sphaericus (strain C3-41), this protein is Small ribosomal subunit protein uS11.